We begin with the raw amino-acid sequence, 695 residues long: Putative ATP-dependent RNA helicase L540 (695 aa).

Residues Leu53–Asp219 enclose the Helicase ATP-binding domain. ATP is bound at residue Ser66 to Ser73. Positions Asp164–His167 match the DEAH box motif. Residues Leu247–Asp434 form the Helicase C-terminal domain.

Belongs to the DEAD box helicase family. DEAH subfamily.

It localises to the virion. The catalysed reaction is ATP + H2O = ADP + phosphate + H(+). The chain is Putative ATP-dependent RNA helicase L540 from Acanthamoeba polyphaga (Amoeba).